Here is a 932-residue protein sequence, read N- to C-terminus: Protocadherin gamma-A3 (932 aa).

Positions 1–29 (MTNCLSFRNGRGLALLCALLGTLCETGSG) are cleaved as a signal peptide. Cadherin domains lie at 30–133 (QIRY…APNF), 134–242 (PTEE…PPMF), 243–347 (TQPE…APEI), 348–452 (TITS…PPTF), 453–562 (PHLS…APEI), and 570–682 (DGST…EPSA). The Extracellular segment spans residues 30–692 (QIRYSVSEEL…KPNDSDLTLY (663 aa)). 3 N-linked (GlcNAc...) asparagine glycosylation sites follow: asparagine 265, asparagine 419, and asparagine 545. Asparagine 685 carries N-linked (GlcNAc...) asparagine glycosylation. The chain crosses the membrane as a helical span at residues 693–713 (LVVAVAAVSCVFLAFVIVLLA). Residues 714-932 (LRLRRWHKSR…KKKSGKKEKK (219 aa)) are Cytoplasmic-facing. Disordered stretches follow at residues 805–841 (NLLQ…WPNN) and 902–932 (ATLT…KEKK). Residues 922-932 (NKKKSGKKEKK) are compositionally biased toward basic residues.

The protein resides in the cell membrane. In terms of biological role, potential calcium-dependent cell-adhesion protein. May be involved in the establishment and maintenance of specific neuronal connections in the brain. In Homo sapiens (Human), this protein is Protocadherin gamma-A3 (PCDHGA3).